A 362-amino-acid chain; its full sequence is tRNA-specific 2-thiouridylase MnmA 1 (362 aa).

ATP-binding positions include 12 to 19 (GMSGGVDS) and M38. Catalysis depends on C104, which acts as the Nucleophile. Residues C104 and C200 are joined by a disulfide bond. Residue G128 coordinates ATP. The interaction with tRNA stretch occupies residues 150–152 (KDQ). C200 acts as the Cysteine persulfide intermediate in catalysis. The interaction with tRNA stretch occupies residues 306–307 (RY).

The protein belongs to the MnmA/TRMU family.

It localises to the cytoplasm. The enzyme catalyses S-sulfanyl-L-cysteinyl-[protein] + uridine(34) in tRNA + AH2 + ATP = 2-thiouridine(34) in tRNA + L-cysteinyl-[protein] + A + AMP + diphosphate + H(+). Functionally, catalyzes the 2-thiolation of uridine at the wobble position (U34) of tRNA, leading to the formation of s(2)U34. The protein is tRNA-specific 2-thiouridylase MnmA 1 of Clostridium tetani (strain Massachusetts / E88).